The following is a 379-amino-acid chain: Cytochrome b (379 aa).

Transmembrane regions (helical) follow at residues 33–53, 77–98, 113–133, 178–198, 226–246, 288–308, 320–340, and 347–367; these read FGSL…FLAM, WLIR…FLHV, WNIG…GYVL, FFAF…VHLL, IKDV…VLFS, LGGV…PILH, LSQC…WIGG, and FITI…LALP. The heme b site is built by H83 and H97. Heme b is bound by residues H182 and H196.

It belongs to the cytochrome b family. The cytochrome bc1 complex contains 11 subunits: 3 respiratory subunits (MT-CYB, CYC1 and UQCRFS1), 2 core proteins (UQCRC1 and UQCRC2) and 6 low-molecular weight proteins (UQCRH/QCR6, UQCRB/QCR7, UQCRQ/QCR8, UQCR10/QCR9, UQCR11/QCR10 and a cleavage product of UQCRFS1). This cytochrome bc1 complex then forms a dimer. The cofactor is heme b.

It localises to the mitochondrion inner membrane. Component of the ubiquinol-cytochrome c reductase complex (complex III or cytochrome b-c1 complex) that is part of the mitochondrial respiratory chain. The b-c1 complex mediates electron transfer from ubiquinol to cytochrome c. Contributes to the generation of a proton gradient across the mitochondrial membrane that is then used for ATP synthesis. In Sciurus niger (Eastern fox squirrel), this protein is Cytochrome b (MT-CYB).